We begin with the raw amino-acid sequence, 87 residues long: Small ribosomal subunit protein uS15c (87 aa).

It belongs to the universal ribosomal protein uS15 family. Part of the 30S ribosomal subunit.

It is found in the plastid. It localises to the chloroplast. This Illicium oligandrum (Star anise) protein is Small ribosomal subunit protein uS15c (rps15).